Reading from the N-terminus, the 497-residue chain is Carboxylesterase (497 aa).

The active-site Acyl-ester intermediate is Ser185. Active-site charge relay system residues include Glu319 and His415.

Belongs to the type-B carboxylesterase/lipase family.

The protein localises to the secreted. The catalysed reaction is a carboxylic ester + H2O = an alcohol + a carboxylate + H(+). This Thermobifida fusca (strain YX) protein is Carboxylesterase.